A 648-amino-acid polypeptide reads, in one-letter code: Biosynthetic arginine decarboxylase (648 aa).

K109 carries the N6-(pyridoxal phosphate)lysine modification. Residue 291–301 coordinates substrate; it reads IDVGGGLGIDF.

The protein belongs to the Orn/Lys/Arg decarboxylase class-II family. SpeA subfamily. Mg(2+) is required as a cofactor. It depends on pyridoxal 5'-phosphate as a cofactor.

It catalyses the reaction L-arginine + H(+) = agmatine + CO2. Its function is as follows. Catalyzes the biosynthesis of agmatine from arginine. The protein is Biosynthetic arginine decarboxylase of Prochlorococcus marinus subsp. pastoris (strain CCMP1986 / NIES-2087 / MED4).